Reading from the N-terminus, the 584-residue chain is Sensor histidine kinase/phosphatase LytS (584 aa).

6 helical membrane-spanning segments follow: residues 2–22, 42–62, 92–112, 121–141, 154–174, and 186–206; these read LSLTMLLLERVGLIIILAYVL, WQLCIIFSLFALMSNLTGIVI, VAGLVGGPFVGLFVGVISGIF, AQVYLISSIFIGIIAGYFGLQ, SAMIGIVMEMIQMLSILTFSH, and IALPMIIVNSVGTAIFMSIII. Positions 311–363 constitute a GAF domain; the sequence is HPNCPLRAAIVIPLEMHGSIVGTLKMYFTNPNDLTFVERQLAEGLANIFSSQI. The 83-residue stretch at 379-461 folds into the Histidine kinase domain; sequence EIKSLQAQVS…RYPGRFNINI (83 aa). H390 carries the post-translational modification Phosphohistidine; by autocatalysis.

In terms of processing, autophosphorylated on His-390.

Its subcellular location is the cell membrane. The enzyme catalyses ATP + protein L-histidine = ADP + protein N-phospho-L-histidine.. Functionally, member of the two-component regulatory system LytR/LytS that regulates genes involved in autolysis, programmed cell death, biofilm formation and cell wall metabolism. Also participates in sensing and responding to host defense cationic antimicrobial peptides (HDPs). Functions as a sensor protein kinase which is autophosphorylated at a histidine residue and transfers its phosphate group to the conserved aspartic acid residue in the regulatory domain of LytR. In turn, LytR binds to the upstream promoter regions of target genes including lrgA and lrgB, to positively regulate their expression. Also possesses a phosphatase activity that dephosphorylates and thus inactivates LytR. This chain is Sensor histidine kinase/phosphatase LytS (lytS), found in Staphylococcus aureus (strain USA300).